A 932-amino-acid polypeptide reads, in one-letter code: Protocadherin gamma-A12 (932 aa).

An N-terminal signal peptide occupies residues 1–29; that stretch reads MIPARLHRDYKGLVLLGILLGTLWETGCT. Cadherin domains are found at residues 30 to 133, 134 to 242, 243 to 347, 348 to 452, 453 to 562, and 570 to 683; these read QIRY…APYF, RESE…APAF, AQPE…APEV, VLTS…PPVF, PQAS…APEI, and DGST…SPAN. Residues 30–692 lie on the Extracellular side of the membrane; sequence QIRYSVPEEL…NSETSDLTLY (663 aa). 3 N-linked (GlcNAc...) asparagine glycosylation sites follow: Asn265, Asn419, and Asn545. A helical transmembrane segment spans residues 693–713; sequence LVVAVAAVSCVFLAFVILLLA. The Cytoplasmic portion of the chain corresponds to 714 to 932; sequence LRLRRWHKSR…KKKSGKKEKK (219 aa). Disordered stretches follow at residues 803 to 841 and 902 to 932; these read SHGL…WPNN and ATLT…KEKK. The segment covering 816–841 has biased composition (polar residues); sequence WRFSQAQRPGTSGSQNGDDTGTWPNN. Positions 922 to 932 are enriched in basic residues; sequence NKKKSGKKEKK.

Its subcellular location is the cell membrane. Potential calcium-dependent cell-adhesion protein. May be involved in the establishment and maintenance of specific neuronal connections in the brain. The polypeptide is Protocadherin gamma-A12 (PCDHGA12) (Homo sapiens (Human)).